We begin with the raw amino-acid sequence, 726 residues long: MSTSDDIHNTTATGKCPFHQGGHDQSAGAGTTTRDWWPNQLRVDLLNQHSNRSNPLGEDFDYRKEFSKLDYYGLKKDLKALLTESQPWWPADWGSYAGLFIRMAWHGAGTYRSIDGRGGAGRGQQRFAPLNSWPDNVSLDKARRLLWPIKQKYGQKISWADLFILAGNVALENSGFRTFGFGAGREDVWEPDLDVNWGDEKAWLTHRHPEALAKAPLGATEMGLIYVNPEGPDHSGEPLSAAAAIRATFGNMGMNDEETVALIAGGHTLGKTHGAGPTSNVGPDPEAAPIEEQGLGWASTYGSGVGADAITSGLEVVWTQTPTQWSNYFFENLFKYEWVQTRSPAGAIQFDAVDAPEIIPDPFDPSKKRKPTMLVTDLTLRFDPEFEKISRRFLNDPQAFNEAFARAWFKLTHRDMGPKSRYIGPEVPKEDLIWQDPLPQPIYNPTEQDIIDLKFAIADSGLSVSELVSVAWASASTFRGGDKRGGANGARLALMPQRDWDVNAAAVRALPVLEKIQKESGKASLADIIVLAGVVGVEKAASAAGLSIHVPFAPGRVDARQDQTDIEMFELLEPIADGFRNYRARLDVSTTESLLIDKAQQLTLTAPEMTALVGGMRVLGANFDSSKNGVFTDRVGVLSNDFFVNLLDMRYEWKATDESKELFEGRDRETGEVKYTASRADLVFGSNSVLRAVAEVYASSDAHEKFVKDFVAAWVKVMNLDRFDLL.

Residues 1-33 (MSTSDDIHNTTATGKCPFHQGGHDQSAGAGTTT) are disordered. A cross-link (tryptophyl-tyrosyl-methioninium (Trp-Tyr) (with M-252)) is located at residues 105–226 (WHGAGTYRSI…LGATEMGLIY (122 aa)). His-106 acts as the Proton acceptor in catalysis. A cross-link (tryptophyl-tyrosyl-methioninium (Tyr-Met) (with W-105)) is located at residues 226 to 252 (YVNPEGPDHSGEPLSAAAAIRATFGNM). His-267 contacts heme b.

This sequence belongs to the peroxidase family. Peroxidase/catalase subfamily. Homodimer or homotetramer. The cofactor is heme b. In terms of processing, formation of the three residue Trp-Tyr-Met cross-link is important for the catalase, but not the peroxidase activity of the enzyme.

The enzyme catalyses H2O2 + AH2 = A + 2 H2O. It catalyses the reaction 2 H2O2 = O2 + 2 H2O. Its function is as follows. Bifunctional enzyme with both catalase and broad-spectrum peroxidase activity. The sequence is that of Catalase-peroxidase from Shigella boydii serotype 18 (strain CDC 3083-94 / BS512).